A 223-amino-acid chain; its full sequence is Prolactin-3D4 (223 aa).

Residues methionine 1–alanine 28 form the signal peptide. Cystine bridges form between cysteine 80-cysteine 198 and cysteine 215-cysteine 223. N-linked (GlcNAc...) asparagine glycans are attached at residues asparagine 108 and asparagine 157.

It belongs to the somatotropin/prolactin family. Post-translationally, N-glycosylated.

It is found in the secreted. This chain is Prolactin-3D4 (Prl3d4), found in Rattus norvegicus (Rat).